The primary structure comprises 336 residues: Ornithine carbamoyltransferase, catabolic (336 aa).

Carbamoyl phosphate is bound by residues 57–60 (STRT), Gln84, Arg108, and 135–138 (HPTQ). Residues Asn168, Asp232, and 236-237 (SM) contribute to the L-ornithine site. Carbamoyl phosphate is bound by residues 274 to 275 (CL) and Arg321.

Belongs to the aspartate/ornithine carbamoyltransferase superfamily. OTCase family.

It is found in the cytoplasm. The enzyme catalyses carbamoyl phosphate + L-ornithine = L-citrulline + phosphate + H(+). The protein operates within amino-acid degradation; L-arginine degradation via ADI pathway; carbamoyl phosphate from L-arginine: step 2/2. Functionally, reversibly catalyzes the transfer of the carbamoyl group from carbamoyl phosphate (CP) to the N(epsilon) atom of ornithine (ORN) to produce L-citrulline. In Pseudomonas putida (strain ATCC 47054 / DSM 6125 / CFBP 8728 / NCIMB 11950 / KT2440), this protein is Ornithine carbamoyltransferase, catabolic (arcB).